The primary structure comprises 39 residues: Photosystem II reaction center protein X (39 aa).

The chain crosses the membrane as a helical span at residues 10 to 30; the sequence is WSLLWGTAIVVIPVTVGLIFI.

It belongs to the PsbX family. Type 1 subfamily. As to quaternary structure, PSII is composed of 1 copy each of membrane proteins PsbA, PsbB, PsbC, PsbD, PsbE, PsbF, PsbH, PsbI, PsbJ, PsbK, PsbL, PsbM, PsbT, PsbX, PsbY, PsbZ, Psb30/Ycf12, peripheral proteins PsbO, CyanoQ (PsbQ), PsbU, PsbV and a large number of cofactors. It forms dimeric complexes.

It is found in the cellular thylakoid membrane. In terms of biological role, involved in the binding and/or turnover of quinones at the Q(B) site of photosystem II (PSII). PSII is a light-driven water plastoquinone oxidoreductase, using light energy to abstract electrons from H(2)O, generating a proton gradient subsequently used for ATP formation. This is Photosystem II reaction center protein X from Nostoc punctiforme (strain ATCC 29133 / PCC 73102).